A 99-amino-acid chain; its full sequence is UPF0213 protein SP_1535 (99 aa).

Residues 3 to 78 (HKAYMYVLEC…KRKKRPQKEE (76 aa)) enclose the GIY-YIG domain.

This sequence belongs to the UPF0213 family.

The sequence is that of UPF0213 protein SP_1535 from Streptococcus pneumoniae serotype 4 (strain ATCC BAA-334 / TIGR4).